A 274-amino-acid polypeptide reads, in one-letter code: Large ribosomal subunit protein uL2 (274 aa).

Residues 223–258 (VAMNPVDHPHGGGEGRTSGGRHPVTPWGIPTKGYKT) form a disordered region.

This sequence belongs to the universal ribosomal protein uL2 family. In terms of assembly, part of the 50S ribosomal subunit. Forms a bridge to the 30S subunit in the 70S ribosome.

One of the primary rRNA binding proteins. Required for association of the 30S and 50S subunits to form the 70S ribosome, for tRNA binding and peptide bond formation. It has been suggested to have peptidyltransferase activity; this is somewhat controversial. Makes several contacts with the 16S rRNA in the 70S ribosome. The protein is Large ribosomal subunit protein uL2 of Geotalea daltonii (strain DSM 22248 / JCM 15807 / FRC-32) (Geobacter daltonii).